The chain runs to 384 residues: UDP-N-acetylglucosamine--N-acetylmuramyl-(pentapeptide) pyrophosphoryl-undecaprenol N-acetylglucosamine transferase (384 aa).

Residues 17 to 19, asparagine 131, arginine 172, serine 200, and glutamine 301 each bind UDP-N-acetyl-alpha-D-glucosamine; that span reads TGG.

This sequence belongs to the glycosyltransferase 28 family. MurG subfamily.

Its subcellular location is the cell inner membrane. It carries out the reaction di-trans,octa-cis-undecaprenyl diphospho-N-acetyl-alpha-D-muramoyl-L-alanyl-D-glutamyl-meso-2,6-diaminopimeloyl-D-alanyl-D-alanine + UDP-N-acetyl-alpha-D-glucosamine = di-trans,octa-cis-undecaprenyl diphospho-[N-acetyl-alpha-D-glucosaminyl-(1-&gt;4)]-N-acetyl-alpha-D-muramoyl-L-alanyl-D-glutamyl-meso-2,6-diaminopimeloyl-D-alanyl-D-alanine + UDP + H(+). It participates in cell wall biogenesis; peptidoglycan biosynthesis. Its function is as follows. Cell wall formation. Catalyzes the transfer of a GlcNAc subunit on undecaprenyl-pyrophosphoryl-MurNAc-pentapeptide (lipid intermediate I) to form undecaprenyl-pyrophosphoryl-MurNAc-(pentapeptide)GlcNAc (lipid intermediate II). The polypeptide is UDP-N-acetylglucosamine--N-acetylmuramyl-(pentapeptide) pyrophosphoryl-undecaprenol N-acetylglucosamine transferase (Granulibacter bethesdensis (strain ATCC BAA-1260 / CGDNIH1)).